The chain runs to 378 residues: Erythronate-4-phosphate dehydrogenase (378 aa).

Positions 45 and 66 each coordinate substrate. NAD(+)-binding residues include aspartate 146 and threonine 175. Arginine 208 is an active-site residue. Aspartate 232 is an NAD(+) binding site. Glutamate 237 is an active-site residue. Histidine 254 functions as the Proton donor in the catalytic mechanism. Glycine 257 is a binding site for NAD(+). Residue tyrosine 258 participates in substrate binding.

This sequence belongs to the D-isomer specific 2-hydroxyacid dehydrogenase family. PdxB subfamily. Homodimer.

It is found in the cytoplasm. It catalyses the reaction 4-phospho-D-erythronate + NAD(+) = (R)-3-hydroxy-2-oxo-4-phosphooxybutanoate + NADH + H(+). It participates in cofactor biosynthesis; pyridoxine 5'-phosphate biosynthesis; pyridoxine 5'-phosphate from D-erythrose 4-phosphate: step 2/5. In terms of biological role, catalyzes the oxidation of erythronate-4-phosphate to 3-hydroxy-2-oxo-4-phosphonooxybutanoate. In Shigella boydii serotype 4 (strain Sb227), this protein is Erythronate-4-phosphate dehydrogenase.